The primary structure comprises 628 residues: Dual specificity testis-specific protein kinase 1 (628 aa).

The tract at residues 1 to 35 (MAGERPPLRGPGPGETPVEGPGGAGGGPGRGRPSS) is disordered. The segment covering 20 to 30 (GPGGAGGGPGR) has biased composition (gly residues). The Protein kinase domain occupies 52–310 (FDCAEKIGAG…EITQHLEQIL (259 aa)). ATP-binding positions include 58–66 (IGAGFFSEV) and lysine 81. Aspartate 170 serves as the catalytic Proton acceptor. Residue serine 215 is modified to Phosphoserine; by autocatalysis. Disordered stretches follow at residues 330–376 (TYNQ…DNLT), 424–490 (PESL…QLPL), and 538–568 (RAQHSLPRAAALERTEPSPPPSAPREQEEGL). At arginine 338 the chain carries Omega-N-methylarginine. Positions 348 to 357 (SDPRLSRSRS) are enriched in basic and acidic residues. The required for interaction with YWHAB stretch occupies residues 421 to 526 (VASPESLVQP…NNNPPAVVVN (106 aa)). Serine 439 is modified (phosphoserine). Positions 478-487 (EPEPPGPAPQ) are enriched in pro residues. Residues 529-626 (QGWAREPWNR…PTPSLQLPGA (98 aa)) form a required for interaction with PARVA region. The tract at residues 529 to 628 (QGWAREPWNR…PSLQLPGARS (100 aa)) is required for interaction with SPRED1 and SPRY2. Required for TESK1-mediated dephosphorylation of SPRY2 and SPRY2 inhibition of ERK phosphorylation.

It belongs to the protein kinase superfamily. TKL Ser/Thr protein kinase family. In terms of assembly, interacts (via both C- and N-termini) with SPRY4 (via C-terminus); the interaction inhibits TESK1 kinase activity. Interacts with TAOK1; the interaction inhibits TAOK1 kinase activity. Interacts (via C-terminus) with SPRED1 (via C-terminus); the interaction inhibits TESK1 kinase activity. Interacts (via C-terminus) with PARVA/PARVIN (via C-terminus); the interaction inhibits TESK1 kinase activity. Interacts with YWHAB/14-3-3 beta; the interaction is dependent on the phosphorylation of TESK1 Ser-439 and inhibits TESK1 kinase activity. Interacts with SPRY1, SPRY3 and SPRED2. Interacts (via C-terminus) with SPRY2 (via C-terminus); the interaction disrupts SPRY2 interaction with PPP2CA/PP2A-C, possibly by vesicular sequestration of SPRY2. Therefore dephosphorylation of SPRY2 by the serine/threonine-protein phosphatase 2A (PP2A) holoenzyme is lost, inhibiting its interaction with GRB2. The cofactor is Mg(2+). Mn(2+) serves as cofactor. Autophosphorylated on serine and tyrosine residues. In terms of tissue distribution, weakly expressed in sciatic nerves (at protein level). Highly expressed in testicular germ cells. Expressed at low levels in brain, lung, heart, liver and kidney.

It is found in the cytoplasm. The protein resides in the perinuclear region. It localises to the cytoskeleton. The protein localises to the microtubule organizing center. Its subcellular location is the centrosome. It is found in the cell projection. The protein resides in the lamellipodium. The catalysed reaction is L-seryl-[protein] + ATP = O-phospho-L-seryl-[protein] + ADP + H(+). The enzyme catalyses L-threonyl-[protein] + ATP = O-phospho-L-threonyl-[protein] + ADP + H(+). It carries out the reaction L-tyrosyl-[protein] + ATP = O-phospho-L-tyrosyl-[protein] + ADP + H(+). With respect to regulation, activated by autophosphorylation on Ser-215. Kinase activity is inhibited by SPRED1. Dual specificity protein kinase activity catalyzing autophosphorylation and phosphorylation of exogenous substrates on both serine/threonine and tyrosine residues. Regulates the cellular cytoskeleton by enhancing actin stress fiber formation via phosphorylation of cofilin and by preventing microtubule breakdown via inhibition of TAOK1/MARKK kinase activity. Inhibits podocyte motility via regulation of actin cytoskeletal dynamics and phosphorylation of CFL1. Positively regulates integrin-mediated cell spreading, via phosphorylation of cofilin. Suppresses ciliogenesis via multiple pathways; phosphorylation of CFL1, suppression of ciliary vesicle directional trafficking to the ciliary base, and by facilitating YAP1 nuclear localization where it acts as a transcriptional corepressor of the TEAD4 target genes AURKA and PLK1. Probably plays a central role at and after the meiotic phase of spermatogenesis. The protein is Dual specificity testis-specific protein kinase 1 (Tesk1) of Rattus norvegicus (Rat).